The sequence spans 78 residues: UPF0291 protein Ldb1355 (78 aa).

The protein belongs to the UPF0291 family.

It is found in the cytoplasm. The polypeptide is UPF0291 protein Ldb1355 (Lactobacillus delbrueckii subsp. bulgaricus (strain ATCC 11842 / DSM 20081 / BCRC 10696 / JCM 1002 / NBRC 13953 / NCIMB 11778 / NCTC 12712 / WDCM 00102 / Lb 14)).